A 474-amino-acid chain; its full sequence is UDP-glycosyltransferase 71E1 (474 aa).

Residues Ser275, 341–342, 359–367, and 381–384 contribute to the UDP-alpha-D-glucose site; these read WA, HCGWNSTLE, and YAEQ.

Belongs to the UDP-glycosyltransferase family.

Its function is as follows. May glycosylate diterpenes or flavonols in leaves. This is UDP-glycosyltransferase 71E1 from Stevia rebaudiana (Stevia).